The primary structure comprises 222 residues: Putative O-methyltransferase MAP_2558 (222 aa).

S-adenosyl-L-methionine contacts are provided by residues Val49, Glu71, 73–74 (GT), Ser79, Asp97, and Ile98. Asp145 contacts substrate. Asp147 is a binding site for S-adenosyl-L-methionine.

It belongs to the class I-like SAM-binding methyltransferase superfamily. Cation-dependent O-methyltransferase family.

The polypeptide is Putative O-methyltransferase MAP_2558 (Mycolicibacterium paratuberculosis (strain ATCC BAA-968 / K-10) (Mycobacterium paratuberculosis)).